We begin with the raw amino-acid sequence, 457 residues long: Variant surface glycoprotein 20 (457 aa).

A signal peptide spans 1–20 (MFTQAVIALIGLVSIRTGKT). Over residues 385-397 (RQTASGDDQSAEN) the composition is skewed to polar residues. Positions 385-406 (RQTASGDDQSAENQCGGKKEDE) are disordered. An N-linked (GlcNAc...) asparagine glycan is attached at Asn436. A lipid anchor (GPI-anchor amidated serine) is attached at Ser440. A propeptide spans 441–457 (NSFVIKKAPLWLAFLLF) (removed in mature form).

The protein localises to the cell membrane. VSG forms a coat on the surface of the parasite. The trypanosome evades the immune response of the host by expressing a series of antigenically distinct VSGs from an estimated 1000 VSG genes. This is Variant surface glycoprotein 20 from Trypanosoma equiperdum.